Reading from the N-terminus, the 331-residue chain is Very-long-chain 3-oxoacyl-CoA reductase (331 aa).

A helical transmembrane segment spans residues 15 to 35; the sequence is VQWALAGVGALYISAKVLSYL. NADP(+) contacts are provided by Val60, Asp115, Asp123, Asn142, Tyr209, Lys213, Ile242, and Ser244. Tyr209 serves as the catalytic Proton donor. Lys213 serves as the catalytic Lowers pKa of active site Tyr.

The protein belongs to the short-chain dehydrogenases/reductases (SDR) family.

Its subcellular location is the endoplasmic reticulum membrane. It carries out the reaction a very-long-chain (3R)-3-hydroxyacyl-CoA + NADP(+) = a very-long-chain 3-oxoacyl-CoA + NADPH + H(+). It participates in lipid metabolism; fatty acid biosynthesis. In terms of biological role, component of the microsomal membrane bound fatty acid elongation system, which produces the 26-carbon very long-chain fatty acids (VLCFA) from palmitate. Catalyzes the reduction of the 3-ketoacyl-CoA intermediate that is formed in each cycle of fatty acid elongation. VLCFAs serve as precursors for ceramide and sphingolipids. This chain is Very-long-chain 3-oxoacyl-CoA reductase, found in Pyricularia oryzae (strain 70-15 / ATCC MYA-4617 / FGSC 8958) (Rice blast fungus).